We begin with the raw amino-acid sequence, 191 residues long: Ribosome maturation factor RimM (191 aa).

One can recognise a PRC barrel domain in the interval 107–184 (EDDEWHQDDL…LVLVSPPPGL (78 aa)).

It belongs to the RimM family. Binds ribosomal protein uS19.

The protein localises to the cytoplasm. An accessory protein needed during the final step in the assembly of 30S ribosomal subunit, possibly for assembly of the head region. Essential for efficient processing of 16S rRNA. May be needed both before and after RbfA during the maturation of 16S rRNA. It has affinity for free ribosomal 30S subunits but not for 70S ribosomes. The protein is Ribosome maturation factor RimM of Kocuria rhizophila (strain ATCC 9341 / DSM 348 / NBRC 103217 / DC2201).